Here is a 222-residue protein sequence, read N- to C-terminus: Secreted protein D (222 aa).

The signal sequence occupies residues 1 to 22 (MKIYYLFFVLIYLIYFINLVYC). Asparagine 25 carries an N-linked (GlcNAc...) asparagine glycan.

The protein belongs to the Sct family.

The protein localises to the secreted. The polypeptide is Secreted protein D (Dictyostelium discoideum (Social amoeba)).